We begin with the raw amino-acid sequence, 375 residues long: Alcohol dehydrogenase 4, mitochondrial (375 aa).

A mitochondrion-targeting transit peptide spans 1-27 (MFRLARAQTALANKASVSRSFLRLNSS). Residues Cys71, His94, Cys125, Cys128, Cys131, Cys139, and Cys181 each coordinate Zn(2+). Residues 205–211 (GAAGGLG), Asp229, Lys234, 296–298 (VGL), and Arg368 each bind NAD(+).

It belongs to the zinc-containing alcohol dehydrogenase family. As to quaternary structure, homotetramer. Zn(2+) is required as a cofactor.

The protein localises to the mitochondrion matrix. The enzyme catalyses a primary alcohol + NAD(+) = an aldehyde + NADH + H(+). It carries out the reaction a secondary alcohol + NAD(+) = a ketone + NADH + H(+). In Kluyveromyces lactis (strain ATCC 8585 / CBS 2359 / DSM 70799 / NBRC 1267 / NRRL Y-1140 / WM37) (Yeast), this protein is Alcohol dehydrogenase 4, mitochondrial (ADH4).